We begin with the raw amino-acid sequence, 90 residues long: YcgL domain-containing protein Spro_2755 (90 aa).

Residues 1–85 (MLCVIYRSSK…PLENLLKQHL (85 aa)) form the YcgL domain.

In Serratia proteamaculans (strain 568), this protein is YcgL domain-containing protein Spro_2755.